The sequence spans 351 residues: Ribosomal RNA large subunit methyltransferase M (351 aa).

S-adenosyl-L-methionine contacts are provided by residues serine 186, 219 to 222 (APGG), aspartate 238, aspartate 258, and aspartate 274. Lysine 303 (proton acceptor) is an active-site residue.

This sequence belongs to the class I-like SAM-binding methyltransferase superfamily. RNA methyltransferase RlmE family. RlmM subfamily. In terms of assembly, monomer.

The protein resides in the cytoplasm. It catalyses the reaction cytidine(2498) in 23S rRNA + S-adenosyl-L-methionine = 2'-O-methylcytidine(2498) in 23S rRNA + S-adenosyl-L-homocysteine + H(+). Its function is as follows. Catalyzes the 2'-O-methylation at nucleotide C2498 in 23S rRNA. In Xylella fastidiosa (strain M23), this protein is Ribosomal RNA large subunit methyltransferase M.